The primary structure comprises 59 residues: Large ribosomal subunit protein bL32 (59 aa).

The segment at 1 to 20 (MAVPRNRHSNARKNIRRSHH) is disordered.

Belongs to the bacterial ribosomal protein bL32 family.

The polypeptide is Large ribosomal subunit protein bL32 (Chlamydia trachomatis serovar A (strain ATCC VR-571B / DSM 19440 / HAR-13)).